Consider the following 344-residue polypeptide: Follistatin (344 aa).

An N-terminal signal peptide occupies residues 1–29 (MVCARHQPGGLCLLLLLLCQFMEDRSAQA). The 74-residue stretch at 30 to 103 (GNCWLRQAKN…TCENVDCGPG (74 aa)) folds into the TB domain. Cystine bridges form between Cys-32–Cys-55, Cys-42–Cys-88, Cys-56–Cys-91, Cys-95–Cys-106, Cys-100–Cys-116, Cys-118–Cys-150, Cys-122–Cys-143, Cys-132–Cys-164, Cys-168–Cys-179, Cys-173–Cys-189, Cys-192–Cys-225, Cys-196–Cys-218, Cys-207–Cys-239, Cys-245–Cys-256, Cys-250–Cys-267, Cys-270–Cys-302, Cys-274–Cys-295, and Cys-284–Cys-316. One can recognise a Follistatin-like 1 domain in the interval 94–117 (TCENVDCGPGKKCRMNKKNKPRCV). In terms of domain architecture, Kazal-like 1 spans 112–166 (NKPRCVCAPDCSNITWKGPVCGLDGKTYRNECALLKARCKEQPELEVQYQGKCKK). An N-linked (GlcNAc...) asparagine glycan is attached at Asn-124. One can recognise a Follistatin-like 2 domain in the interval 167-190 (TCRDVFCPGSSTCVVDQTNNAYCV). Positions 186 to 241 (NAYCVTCNRICPEPSSSEQYLCGNDGVTYSSACHLRKATCLLGRSIGLAYEGKCIK) constitute a Kazal-like 2 domain. Positions 244–268 (SCEDIQCGGGKKCLWDSKVGRGRCS) constitute a Follistatin-like 3 domain. Residues 264-318 (RGRCSLCDELCPDSKSDEPVCASDNATYASECAMKEAACSSGVLLEVKHSGSCNS) enclose the Kazal-like 3 domain. Asn-288 carries N-linked (GlcNAc...) asparagine glycosylation. A disordered region spans residues 315–344 (SCNSISEETEEEEEEEDQDYSFPISSILEW). Residues 321-333 (EETEEEEEEEDQD) show a composition bias toward acidic residues.

Interacts with GDF11. Interacts with activin A/INHBA. Interacts with myostatin/MSTN.

It localises to the secreted. It is found in the nucleus. The protein resides in the nucleolus. Multifunctional regulatory protein whose primary function is to antagonize members of the transforming growth factor beta (TGF-beta) superfamily including activin, myostatin, GDF11 or bone morphogenetic proteins (BMPs). Mechanistically, binds to these ligands in the extracellular space, blocking their type II receptor-binding site to inhibit downstream signaling. Plays an essential role in muscle fiber formation and growth both by preventing the repressive effects of myostatin and through SMAD3/AKT/mTOR signaling independently of myostatin. Also promotes neural differentiation by antagonizing the action BMP4. Acts as a specific inhibitor of the biosynthesis and secretion of pituitary follicle stimulating hormone (FSH) by sequestering activin A/INHBA. On the other hand, translocates into the nucleus where it down-regulates rRNA synthesis and ribosome biogenesis to maintain cellular energy homeostasis by binding to rDNA. This chain is Follistatin, found in Mus musculus (Mouse).